Consider the following 637-residue polypeptide: Threonine--tRNA ligase (637 aa).

The region spanning 1–61 (MIKISLKNGK…NKDCKVEILT (61 aa)) is the TGS domain. Residues 242-532 (DHRKLGKELD…LIEHYAGAFP (291 aa)) form a catalytic region. The Zn(2+) site is built by C333, H384, and H509.

It belongs to the class-II aminoacyl-tRNA synthetase family. In terms of assembly, homodimer. It depends on Zn(2+) as a cofactor.

It is found in the cytoplasm. The enzyme catalyses tRNA(Thr) + L-threonine + ATP = L-threonyl-tRNA(Thr) + AMP + diphosphate + H(+). In terms of biological role, catalyzes the attachment of threonine to tRNA(Thr) in a two-step reaction: L-threonine is first activated by ATP to form Thr-AMP and then transferred to the acceptor end of tRNA(Thr). Also edits incorrectly charged L-seryl-tRNA(Thr). This chain is Threonine--tRNA ligase, found in Clostridium kluyveri (strain NBRC 12016).